Consider the following 329-residue polypeptide: ADP-L-glycero-D-manno-heptose-6-epimerase (329 aa).

NADP(+)-binding positions include 10–11 (FI), 31–32 (DD), Lys38, Lys53, 74–78 (QGACS), and Asn91. Tyr138 (proton acceptor) is an active-site residue. Lys142 serves as a coordination point for NADP(+). Substrate is bound at residue Asn167. Residues Val168 and Lys176 each coordinate NADP(+). Lys176 serves as the catalytic Proton acceptor. Substrate contacts are provided by residues Arg178, His185, 199-202 (FAGW), Arg212, and Tyr291.

The protein belongs to the NAD(P)-dependent epimerase/dehydratase family. HldD subfamily. As to quaternary structure, homopentamer. It depends on NADP(+) as a cofactor.

It carries out the reaction ADP-D-glycero-beta-D-manno-heptose = ADP-L-glycero-beta-D-manno-heptose. The protein operates within nucleotide-sugar biosynthesis; ADP-L-glycero-beta-D-manno-heptose biosynthesis; ADP-L-glycero-beta-D-manno-heptose from D-glycero-beta-D-manno-heptose 7-phosphate: step 4/4. It functions in the pathway bacterial outer membrane biogenesis; LPS core biosynthesis. Functionally, catalyzes the interconversion between ADP-D-glycero-beta-D-manno-heptose and ADP-L-glycero-beta-D-manno-heptose via an epimerization at carbon 6 of the heptose. In Bordetella pertussis (strain Tohama I / ATCC BAA-589 / NCTC 13251), this protein is ADP-L-glycero-D-manno-heptose-6-epimerase.